Consider the following 318-residue polypeptide: Esterase FVEG_12639 (318 aa).

Active-site residues include Ser156, Asp255, and His285.

Belongs to the AB hydrolase 3 family.

In terms of biological role, esterase; part of the Fusarium detoxification of benzoxazolinone cluster 2 (FDB2) involved in the degradation of benzoxazolinones produced by the host plant. Maize, wheat, and rye produce the 2 benzoxazinone phytoanticipins 2,4-dihy-droxy-7-methoxy-1,4-benzoxazin-3-one (DIMBOA) and 2,4-dihydroxy-1,4-benzoxazin-3-one (DIBOA) that, due to their inherent instability once released, spontaneously degrade to the more stable corresponding benzoxazolinones, 6-methoxy-2-benzoxazolinone (MBOA) and 2-benzoxazolinone (BOA), respectively. The first step in the detoxification of benzoxazolinones involves the hydrolysis of the cyclic ester bond of benzoxazolinones by the FDB1 cluster gamma-lactamase MBL1 to aminophenols. MBL1 is able to convert BOA into 2-aminophenol (2-AP), as well as MBOA into 5-methoxy-2-aminophenol (2-AMP). The FDB2 cluster N-malonyltransferase FDB2/NAT1 then metabolizes aminophenols via N-malonylation to non-toxic malonamic acids. FDB2/NAT1 converts 2-AP into N-(2-hydroxyphenyl) malonamic acid (HPMA) and 2-AMP into N-(2-hydroxy-4-methoxyphenyl) malonamic acid (HMPMA). The duplicated dienlactone hydrolases DLH1 and DLH2 may provide redundant function for hydrolyzing the lactone moiety in the BOA molecule. The roles of the amidases an other enzymes encoded by the 2 FDB clusters have not been identified so far. This chain is Esterase FVEG_12639, found in Gibberella moniliformis (strain M3125 / FGSC 7600) (Maize ear and stalk rot fungus).